Consider the following 123-residue polypeptide: MTREEIIEAIKGMSVLELNELVKACEEEFGVSAAAPVAVAGAAGAAGAAAGEEKTEFDVVLAEAGAKKLQVIKVVRELTGLGLKDAKALVDGAPKTIKEGVAKEEAESMKAKIEEAGGKVELK.

This sequence belongs to the bacterial ribosomal protein bL12 family. Homodimer. Part of the ribosomal stalk of the 50S ribosomal subunit. Forms a multimeric L10(L12)X complex, where L10 forms an elongated spine to which 2 to 4 L12 dimers bind in a sequential fashion. Binds GTP-bound translation factors.

Its function is as follows. Forms part of the ribosomal stalk which helps the ribosome interact with GTP-bound translation factors. Is thus essential for accurate translation. This Clostridium acetobutylicum (strain ATCC 824 / DSM 792 / JCM 1419 / IAM 19013 / LMG 5710 / NBRC 13948 / NRRL B-527 / VKM B-1787 / 2291 / W) protein is Large ribosomal subunit protein bL12.